Here is a 181-residue protein sequence, read N- to C-terminus: Respiratory supercomplex factor 1, mitochondrial (181 aa).

An HIG1 domain is found at 6–97 (LPSSMEDNPQ…TERQQRREFE (92 aa)). 2 helical membrane passes run 33–49 (PLIP…LYRA) and 69–86 (IYAQ…GMYF). The disordered stretch occupies residues 136-160 (AAKEAGKRPAPNKIPEQDAARSAIE).

Belongs to the RCF1 family. As to quaternary structure, associates with the respiratory chain complex III/complex IV supercomplex.

The protein resides in the mitochondrion membrane. Functionally, cytochrome c oxidase subunit which plays a role in assembly of respiratory supercomplexes. This is Respiratory supercomplex factor 1, mitochondrial (rcf1) from Neosartorya fischeri (strain ATCC 1020 / DSM 3700 / CBS 544.65 / FGSC A1164 / JCM 1740 / NRRL 181 / WB 181) (Aspergillus fischerianus).